The following is a 527-amino-acid chain: Putative GTP-binding protein 6 (527 aa).

The Hflx-type G domain occupies 306 to 470 (PIISILGYTN…QVETAVMKST (165 aa)). GTP-binding positions include 312–319 (GYTNSGKT), 338–342 (FATLD), 360–363 (DTIG), 429–432 (NKID), and 448–450 (SAL). Residues Thr319 and Thr340 each coordinate Mg(2+).

This sequence belongs to the TRAFAC class OBG-HflX-like GTPase superfamily. HflX GTPase family. Mg(2+) is required as a cofactor.

The protein is Putative GTP-binding protein 6 (gtpbp6) of Xenopus laevis (African clawed frog).